A 351-amino-acid polypeptide reads, in one-letter code: Uroporphyrinogen decarboxylase (351 aa).

Substrate is bound by residues 26–30, Phe-45, Asp-76, Tyr-153, Ser-208, and His-323; that span reads RQAGR.

The protein belongs to the uroporphyrinogen decarboxylase family. In terms of assembly, homodimer.

Its subcellular location is the cytoplasm. It carries out the reaction uroporphyrinogen III + 4 H(+) = coproporphyrinogen III + 4 CO2. The protein operates within porphyrin-containing compound metabolism; protoporphyrin-IX biosynthesis; coproporphyrinogen-III from 5-aminolevulinate: step 4/4. Its function is as follows. Catalyzes the decarboxylation of four acetate groups of uroporphyrinogen-III to yield coproporphyrinogen-III. The polypeptide is Uroporphyrinogen decarboxylase (Prochlorococcus marinus (strain SARG / CCMP1375 / SS120)).